A 247-amino-acid polypeptide reads, in one-letter code: Phycocyanobilin:ferredoxin oxidoreductase (247 aa).

This sequence belongs to the HY2 family.

The catalysed reaction is (2R,3Z)-phycocyanobilin + 4 oxidized [2Fe-2S]-[ferredoxin] = biliverdin IXalpha + 4 reduced [2Fe-2S]-[ferredoxin] + 4 H(+). Catalyzes the four-electron reduction of biliverdin IX-alpha (2-electron reduction at both the A and D rings); the reaction proceeds via an isolatable 2-electron intermediate, 181,182-dihydrobiliverdin. The polypeptide is Phycocyanobilin:ferredoxin oxidoreductase (pcyA) (Prochlorococcus marinus (strain SARG / CCMP1375 / SS120)).